Consider the following 168-residue polypeptide: Tyrosine-protein phosphatase (168 aa).

A Tyrosine-protein phosphatase domain is found at 24–168 (FKTPLRPELF…RQNYVQDLLI (145 aa)). Cysteine 119 acts as the Phosphocysteine intermediate in catalysis.

It belongs to the protein-tyrosine phosphatase family. Non-receptor class CDC14 subfamily.

The catalysed reaction is O-phospho-L-tyrosyl-[protein] + H2O = L-tyrosyl-[protein] + phosphate. Its function is as follows. Plays a role in the regulation and processing of late viral mRNAs by displaying RNA 5'-triphosphatase and diphosphatase activities. The protein is Tyrosine-protein phosphatase (PTP) of Autographa californica nuclear polyhedrosis virus (AcMNPV).